The chain runs to 259 residues: Phosphoadenosine 5'-phosphosulfate reductase (259 aa).

The active-site Nucleophile; cysteine thiosulfonate intermediate is Cys244.

It belongs to the PAPS reductase family. CysH subfamily.

Its subcellular location is the cytoplasm. It catalyses the reaction [thioredoxin]-disulfide + sulfite + adenosine 3',5'-bisphosphate + 2 H(+) = [thioredoxin]-dithiol + 3'-phosphoadenylyl sulfate. It functions in the pathway sulfur metabolism; hydrogen sulfide biosynthesis; sulfite from sulfate: step 3/3. Functionally, catalyzes the formation of sulfite from phosphoadenosine 5'-phosphosulfate (PAPS) using thioredoxin as an electron donor. This is Phosphoadenosine 5'-phosphosulfate reductase from Vibrio parahaemolyticus serotype O3:K6 (strain RIMD 2210633).